Consider the following 36-residue polypeptide: U14-myrmicitoxin-Tb1a (36 aa).

A signal peptide spans 1–23 (MKIIKLITIFTMMATLMXXVANG). Residues 24 to 25 (EP) constitute a propeptide that is removed on maturation. Q35 carries the glutamine amide modification.

Expressed by the venom gland.

The protein resides in the secreted. In terms of biological role, venom protein with unknown function. Does not induce paralysis when a high dose is administered by intrathoracic injection into the blowfly Lucilia caesar. This Tetramorium bicarinatum (Tramp ant) protein is U14-myrmicitoxin-Tb1a.